The sequence spans 309 residues: Succinoglycan biosynthesis protein ExoM (309 aa).

It belongs to the glycosyltransferase 2 family.

The protein localises to the cell inner membrane. It participates in glycan metabolism; exopolysaccharide biosynthesis. Its function is as follows. Glycosyltransferase required for the synthesis of succinoglycan (EPS I). Needed for the addition of the fourth sugar (glucose), catalyzes the formation of a beta-1,4 linkage between the third acetylated sugar and the fourth sugar. This Rhizobium meliloti (strain 1021) (Ensifer meliloti) protein is Succinoglycan biosynthesis protein ExoM (exoM).